The primary structure comprises 436 residues: MMHYDVAVIGGGIAGYSAALRALQAGKKVVLINQGQSALHFSSGSIDVLGRLPDGSVVNQPFDALSALQQQVPEHPYSKVGRKNSEKGLMWFKRTLDSAHVPLHHEPDGANHWRITPLGTLKNTWLSQPFVYPYRGNADFSRIMIVAIDGYRDFQPAMLRDNLAQRPELANTPMLTVNVSIPGFEGFRRNPNELRSIDIARLLRQESAWNALCDQLMRVARPDDLVIMPAIMGNGDGLHLMSKLQQVTQLRFHEVPTMPPSLLGIRIEEALHRSFIQGGGVQLKGDKVIDGDFAGSRLTAIHTQNLRDFPISAEHYVMATGSYFSQGLQASQHAIQEPTFALDVQQNPDRAQWRHAQFIAAQSHPFMTFGVTTDANLHPSRQGKTIDNLWCCGAMLSGYDPVFEGCGGGVAIATAYHAVEQILATYAQTKQPEVLL.

Belongs to the anaerobic G-3-P dehydrogenase subunit B family. Composed of a catalytic GlpA/B dimer and of membrane bound GlpC. Requires FMN as cofactor.

It carries out the reaction a quinone + sn-glycerol 3-phosphate = dihydroxyacetone phosphate + a quinol. It participates in polyol metabolism; glycerol degradation via glycerol kinase pathway; glycerone phosphate from sn-glycerol 3-phosphate (anaerobic route): step 1/1. Its function is as follows. Conversion of glycerol 3-phosphate to dihydroxyacetone. Uses fumarate or nitrate as electron acceptor. This is Anaerobic glycerol-3-phosphate dehydrogenase subunit B from Vibrio cholerae serotype O1 (strain M66-2).